We begin with the raw amino-acid sequence, 356 residues long: Glycerol-3-phosphate dehydrogenase [NAD(P)+] (356 aa).

NADPH-binding residues include Trp-12, Arg-32, Arg-33, and Lys-117. The sn-glycerol 3-phosphate site is built by Lys-117, Gly-151, and Ser-153. Residue Ala-155 participates in NADPH binding. 4 residues coordinate sn-glycerol 3-phosphate: Lys-206, Asp-265, Arg-276, and Asn-277. Lys-206 serves as the catalytic Proton acceptor. Arg-276 serves as a coordination point for NADPH. Residues Leu-309 and Glu-311 each contribute to the NADPH site.

This sequence belongs to the NAD-dependent glycerol-3-phosphate dehydrogenase family.

It localises to the cytoplasm. It catalyses the reaction sn-glycerol 3-phosphate + NAD(+) = dihydroxyacetone phosphate + NADH + H(+). It carries out the reaction sn-glycerol 3-phosphate + NADP(+) = dihydroxyacetone phosphate + NADPH + H(+). It functions in the pathway membrane lipid metabolism; glycerophospholipid metabolism. In terms of biological role, catalyzes the reduction of the glycolytic intermediate dihydroxyacetone phosphate (DHAP) to sn-glycerol 3-phosphate (G3P), the key precursor for phospholipid synthesis. The chain is Glycerol-3-phosphate dehydrogenase [NAD(P)+] from Treponema pallidum (strain Nichols).